Here is a 342-residue protein sequence, read N- to C-terminus: Methionyl-tRNA formyltransferase (342 aa).

Residue 119–122 (SILP) coordinates (6S)-5,6,7,8-tetrahydrofolate.

The protein belongs to the Fmt family.

The catalysed reaction is L-methionyl-tRNA(fMet) + (6R)-10-formyltetrahydrofolate = N-formyl-L-methionyl-tRNA(fMet) + (6S)-5,6,7,8-tetrahydrofolate + H(+). Functionally, attaches a formyl group to the free amino group of methionyl-tRNA(fMet). The formyl group appears to play a dual role in the initiator identity of N-formylmethionyl-tRNA by promoting its recognition by IF2 and preventing the misappropriation of this tRNA by the elongation apparatus. The chain is Methionyl-tRNA formyltransferase from Nostoc sp. (strain PCC 7120 / SAG 25.82 / UTEX 2576).